Reading from the N-terminus, the 447-residue chain is MSRRPCSCALRPPRCSCSASPSAVTAAGRPRPSDSCKEESSTLSVKMKCDFNCNHVHSGLKLVKPDDIGRLVSYTPAYLEGSCKDCIKDYERLSCIGSPIVSPRIVQLETESKRLHNKENQHVQQTLNSTNEIEALETSRLYEDSGYSSFSLQSGLSEHEEGSLLEENFGDSLQSCLLQIQSPDQYPNKNLLPVLHFEKVVCSTLKKNAKRNPKVDREMLKEIIARGNFRLQNIIGRKMGLECVDILSELFRRGLRHVLATILAQLSDMDLINVSKVSTTWKKILEDDKGAFQLYSKAIQRVTENNNKFSPHASTREYVMFRTPLASVQKSAAQTSLKKDAQTKLSNQGDQKGSTYSRHNEFSEVAKTLKKNESLKACIRCNSPAKYDCYLQRATCKREGCGFDYCTKCLCNYHTTKDCSDGKLLKASCKIGPLPGTKKSKKNLRRL.

A phosphoserine mark is found at Ser-94 and Ser-102. The tract at residues 135-244 (ALETSRLYED…IGRKMGLECV (110 aa)) is interaction with EVI5. The region spanning 250–296 (LFRRGLRHVLATILAQLSDMDLINVSKVSTTWKKILEDDKGAFQLYS) is the F-box domain. The segment at 261-339 (TILAQLSDMD…KSAAQTSLKK (79 aa)) is sufficient for interaction with RPS6KA2; Prevents association of CDC20 with RPS6KA2. The interval 261 to 409 (TILAQLSDMD…GCGFDYCTKC (149 aa)) is requires for efficient binding to CDC20. Positions 305–447 (NNNKFSPHAS…KKSKKNLRRL (143 aa)) are inhibits APC ubiquitin ligase activity. The segment at 322-325 (RTPL) is competitively blocks access of APC substrates to the D-box coreceptor formed by FZR1 and ANAPC10. Residues 337–358 (LKKDAQTKLSNQGDQKGSTYSR) form a disordered region. Residues 343–357 (TKLSNQGDQKGSTYS) are compositionally biased toward polar residues. The ZBR-type zinc-finger motif lies at 374-422 (SLKACIRCNSPAKYDCYLQRATCKREGCGFDYCTKCLCNYHTTKDCSDG). The Zn(2+) site is built by Cys-378, Cys-381, Cys-396, Cys-401, Cys-406, Cys-409, His-414, and Cys-419. Residues 378-420 (CIRCNSPAKYDCYLQRATCKREGCGFDYCTKCLCNYHTTKDCS) form an allows a rapid multiple mono-ubiquitination of the APC substrate, but strongly inhibits the slow ubiquitin chain elongation catalyzed by UBCH10 region. The tract at residues 437-447 (TKKSKKNLRRL) is sufficient to suppress UBE2S activity; essential for interaction with UBE2S; competitively inhibits the rapide ubiquitin chain elongation by UBE2D1 which blocks UBE2D1 with APC; indispensable for recruitment and position of FBXO5 to the catalytic site of APC; abrogates the inhibition of ubiquitin chain assembly primarily catalyzed by UBE2S; inhibits the ubiquitination by either UBE2C or UBE2D1.

As to quaternary structure, part of a SCF (SKP1-cullin-F-box) protein ligase complex. Interacts with BTRC; mediates proteolysis by the SCF ubiquitin ligase complex leading to activation of APC in late mitosis and subsequent mitotic progression. Interacts with FZR1/CDH1 and the N-terminal substrate-binding domain of CDC20; prevents APC activation. Also interacts with EVI5 which blocks its phosphorylation by PLK1 and prevents its subsequent binding to BTRC and degradation. Interacts simultaneously with anaphase promoting complex (APC), through at least ANAPC2, CDC23, CDC27, the APC substrate GMNN and the APC activator FZR1. Interacts with UBE2S; interferes with the activity of UBE2S mainly by disrupting the dynamic electrostatic association between the C-terminal tail of UBE2S and ANAPC2. Interacts with RPS6KA2; cooperates to induce the metaphase arrest of early blastomeres; increases and stabilizes interaction of FBXO5 with CDC20. In terms of processing, phosphorylation by CDK2 and subsequently by PLK1 triggers degradation during early mitosis through ubiquitin-mediated proteolysis by the SCF ubiquitin ligase complex containing the F-box protein BTRC. This degradation is necessary for the activation of APC in late mitosis and subsequent mitotic progression. Phosphorylated by RPS6KA2; increases and stabilizes interaction with CDC20. Ubiquitinated by the SCF(BTRC) complex following phosphorylation by PLK1. Undergoes both 'Lys-11' and 'Lys-48'-linked polyubiquitination by APC-FZR1 complex leading to degradation by proteasome during G1 phase. Degraded through the SCF(BTRC) complex; degradation occurs during oocyte maturation, between germinal vesicle breakdown (GVBD) and meiosis I, and is required for the meiosis I-meiosis II transition.

It is found in the nucleus. The protein localises to the cytoplasm. It localises to the cytoskeleton. Its subcellular location is the spindle. It participates in protein modification; protein ubiquitination. Its function is as follows. Regulator of APC activity during mitotic and meiotic cell cycle. During mitotic cell cycle plays a role as both substrate and inhibitor of APC-FZR1 complex. During G1 phase, plays a role as substrate of APC-FZR1 complex E3 ligase. Then switches as an inhibitor of APC-FZR1 complex during S and G2 leading to cell-cycle commitment. As APC inhibitor, prevents the degradation of APC substrates at multiple levels: by interacting with APC and blocking access of APC substrates to the D-box coreceptor, formed by FZR1 and ANAPC10; by suppressing ubiquitin ligation and chain elongation by APC by preventing the UBE2C and UBE2S activities. Plays a role in genome integrity preservation by coordinating DNA replication with mitosis through APC inhibition in interphase to stabilize CCNA2 and GMNN in order to promote mitosis and prevent rereplication and DNA damage-induced cellular senescence. During oocyte maturation, plays a role in meiosis through inactivation of APC-FZR1 complex. Inhibits APC through RPS6KA2 interaction that increases FBXO5 affiniy for CDC20 leading to the metaphase arrest of the second meiotic division before fertilization. Controls entry into the first meiotic division through inactivation of APC-FZR1 complex. Promotes migration and osteogenic differentiation of mesenchymal stem cells. This is F-box only protein 5 from Homo sapiens (Human).